The sequence spans 351 residues: Penicillolysin (351 aa).

The signal sequence occupies residues 1 to 19; it reads MRFTTLSTAFLALAQNVYA. A propeptide spanning residues 20-174 is cleaved from the precursor; that stretch reads FPIESDLSAL…TKALKPLDRR (155 aa). Residues asparagine 52 and asparagine 181 are each glycosylated (N-linked (GlcNAc...) asparagine). Histidine 302 serves as a coordination point for Zn(2+). The active site involves glutamate 303. Positions 306 and 317 each coordinate Zn(2+).

Belongs to the peptidase M35 family. It depends on Zn(2+) as a cofactor.

The catalysed reaction is Preferential cleavage of bonds with hydrophobic residues in P1'. Also 3-Asn-|-Gln-4 and 8-Gly-|-Ser-9 bonds in insulin B chain.. The chain is Penicillolysin (plnC) from Penicillium citrinum.